A 105-amino-acid chain; its full sequence is Large ribosomal subunit protein uL24 (105 aa).

Belongs to the universal ribosomal protein uL24 family. In terms of assembly, part of the 50S ribosomal subunit.

Functionally, one of two assembly initiator proteins, it binds directly to the 5'-end of the 23S rRNA, where it nucleates assembly of the 50S subunit. One of the proteins that surrounds the polypeptide exit tunnel on the outside of the subunit. The polypeptide is Large ribosomal subunit protein uL24 (Methylobacterium sp. (strain 4-46)).